We begin with the raw amino-acid sequence, 136 residues long: Protein NrdI (136 aa).

Belongs to the NrdI family.

Functionally, probably involved in ribonucleotide reductase function. This chain is Protein NrdI, found in Salmonella paratyphi A (strain ATCC 9150 / SARB42).